The following is a 163-amino-acid chain: Dual specificity phosphatase 28 (163 aa).

The 142-residue stretch at 10-151 (PFARVAPALF…LQKYEQTLQA (142 aa)) folds into the Tyrosine-protein phosphatase domain. The active-site Phosphocysteine intermediate is the Cys95.

Belongs to the protein-tyrosine phosphatase family. Non-receptor class dual specificity subfamily. Monomer.

The catalysed reaction is O-phospho-L-tyrosyl-[protein] + H2O = L-tyrosyl-[protein] + phosphate. It carries out the reaction O-phospho-L-seryl-[protein] + H2O = L-seryl-[protein] + phosphate. The enzyme catalyses O-phospho-L-threonyl-[protein] + H2O = L-threonyl-[protein] + phosphate. Has phosphatase activity with the synthetic substrate 6,8-difluoro-4-methylumbelliferyl phosphate (in vitro). Has almost no detectable activity with phosphotyrosine, even less activity with phosphothreonine and displays complete lack of activity with phosphoserine. The poor activity with phosphotyrosine may be due to steric hindrance by bulky amino acid sidechains that obstruct access to the active site. This chain is Dual specificity phosphatase 28 (Dusp28), found in Mus musculus (Mouse).